Reading from the N-terminus, the 434-residue chain is Nuclear receptor subfamily 1 group I member 2 (434 aa).

The nuclear receptor DNA-binding region spans 38 to 107 (PQICRVCGDK…RLRKCLESGM (70 aa)). 2 NR C4-type zinc fingers span residues 41-61 (CRVC…CEGC) and 77-102 (CPFR…LRKC). The Bipartite nuclear localization signal motif lies at 66–92 (RRAMKRNARLRCPFRKGACEITRKTRR). The hinge stretch occupies residues 108–145 (KKEMIMSDAAVEERRALIKRKKRERIGTQPPGVQGLTE). Residues 146 to 433 (EQRMMIRELM…LMQELFGITG (288 aa)) enclose the NR LBD domain. Hyperforin contacts are provided by residues serine 247, 285-288 (QLRF), and histidine 407.

The protein belongs to the nuclear hormone receptor family. NR1 subfamily. Heterodimer with RXRA. Interacts with NCOA1. Interacts (via domain NR LBD) with CRY1 and CRY2 in a ligand-dependent manner.

It is found in the nucleus. Its function is as follows. Nuclear receptor that binds and is activated by a variety of endogenous and xenobiotic compounds. Transcription factor that activates the transcription of multiple genes involved in the metabolism and secretion of potentially harmful xenobiotics, endogenous compounds and drugs. Response to specific ligands is species-specific, due to differences in the ligand-binding domain. Activated by naturally occurring steroids, such as pregnenolone and progesterone. Binds to a response element in the promoters of the CYP3A4 and ABCB1/MDR1 genes. This chain is Nuclear receptor subfamily 1 group I member 2 (NR1I2), found in Macaca mulatta (Rhesus macaque).